Here is a 613-residue protein sequence, read N- to C-terminus: Dihydroxy-acid dehydratase (613 aa).

Residue D81 participates in Mg(2+) binding. C122 lines the [2Fe-2S] cluster pocket. Mg(2+)-binding residues include D123 and K124. N6-carboxylysine is present on K124. C195 is a [2Fe-2S] cluster binding site. Position 491 (E491) interacts with Mg(2+). S517 acts as the Proton acceptor in catalysis.

The protein belongs to the IlvD/Edd family. Homodimer. [2Fe-2S] cluster serves as cofactor. The cofactor is Mg(2+).

It catalyses the reaction (2R)-2,3-dihydroxy-3-methylbutanoate = 3-methyl-2-oxobutanoate + H2O. It carries out the reaction (2R,3R)-2,3-dihydroxy-3-methylpentanoate = (S)-3-methyl-2-oxopentanoate + H2O. It participates in amino-acid biosynthesis; L-isoleucine biosynthesis; L-isoleucine from 2-oxobutanoate: step 3/4. The protein operates within amino-acid biosynthesis; L-valine biosynthesis; L-valine from pyruvate: step 3/4. In terms of biological role, functions in the biosynthesis of branched-chain amino acids. Catalyzes the dehydration of (2R,3R)-2,3-dihydroxy-3-methylpentanoate (2,3-dihydroxy-3-methylvalerate) into 2-oxo-3-methylpentanoate (2-oxo-3-methylvalerate) and of (2R)-2,3-dihydroxy-3-methylbutanoate (2,3-dihydroxyisovalerate) into 2-oxo-3-methylbutanoate (2-oxoisovalerate), the penultimate precursor to L-isoleucine and L-valine, respectively. This Vibrio vulnificus (strain CMCP6) protein is Dihydroxy-acid dehydratase.